The chain runs to 531 residues: Dimethylnonatriene synthase (531 aa).

Residues 6–26 (TMSVAMALAAAIFVVLCSVVA) traverse the membrane as a helical segment. C464 provides a ligand contact to heme.

The protein belongs to the cytochrome P450 family. Heme is required as a cofactor.

It localises to the membrane. The catalysed reaction is (6E,10E)-geranyllinalool + reduced [NADPH--hemoprotein reductase] + O2 = (3E,7E)-4,8,12-trimethyltrideca 1,3,7,11-tetraene + but-3-en-2-one + oxidized [NADPH--hemoprotein reductase] + 2 H2O + H(+). It carries out the reaction (3S,6E)-nerolidol + reduced [NADPH--hemoprotein reductase] + O2 = (3E)-4,8-dimethylnona-1,3,7-triene + but-3-en-2-one + oxidized [NADPH--hemoprotein reductase] + 2 H2O + H(+). It participates in secondary metabolite biosynthesis; terpenoid biosynthesis. Its function is as follows. Involved in the biosynthesis of homoterpenes, attractants of herbivores parasitoids and predators (e.g. predatory mites and parasitoid wasps). Component of the volatile terpenes biosynthesis pathways. Converts mainly nerolidol to dimethylnonatriene (DMNT) and, to a lower extent, geranyllinalool to trimethyltridecatetraene (TMTT). This chain is Dimethylnonatriene synthase, found in Zea mays (Maize).